The following is a 433-amino-acid chain: Serine--tRNA ligase (433 aa).

Threonine 235 to glutamate 237 provides a ligand contact to L-serine. An ATP-binding site is contributed by arginine 266–glutamate 268. L-serine is bound at residue glutamate 289. Position 353 to 356 (glutamate 353 to serine 356) interacts with ATP. L-serine is bound at residue serine 388.

Belongs to the class-II aminoacyl-tRNA synthetase family. Type-1 seryl-tRNA synthetase subfamily. As to quaternary structure, homodimer. The tRNA molecule binds across the dimer.

It localises to the cytoplasm. The enzyme catalyses tRNA(Ser) + L-serine + ATP = L-seryl-tRNA(Ser) + AMP + diphosphate + H(+). The catalysed reaction is tRNA(Sec) + L-serine + ATP = L-seryl-tRNA(Sec) + AMP + diphosphate + H(+). It functions in the pathway aminoacyl-tRNA biosynthesis; selenocysteinyl-tRNA(Sec) biosynthesis; L-seryl-tRNA(Sec) from L-serine and tRNA(Sec): step 1/1. In terms of biological role, catalyzes the attachment of serine to tRNA(Ser). Is also able to aminoacylate tRNA(Sec) with serine, to form the misacylated tRNA L-seryl-tRNA(Sec), which will be further converted into selenocysteinyl-tRNA(Sec). The chain is Serine--tRNA ligase from Burkholderia cenocepacia (strain ATCC BAA-245 / DSM 16553 / LMG 16656 / NCTC 13227 / J2315 / CF5610) (Burkholderia cepacia (strain J2315)).